Here is a 228-residue protein sequence, read N- to C-terminus: 7-cyano-7-deazaguanine synthase (228 aa).

9 to 19 (LSGGPDSTTVL) contacts ATP. Residues Cys-193, Cys-203, Cys-206, and Cys-209 each contribute to the Zn(2+) site.

This sequence belongs to the QueC family. It depends on Zn(2+) as a cofactor.

The catalysed reaction is 7-carboxy-7-deazaguanine + NH4(+) + ATP = 7-cyano-7-deazaguanine + ADP + phosphate + H2O + H(+). It participates in purine metabolism; 7-cyano-7-deazaguanine biosynthesis. Its function is as follows. Catalyzes the ATP-dependent conversion of 7-carboxy-7-deazaguanine (CDG) to 7-cyano-7-deazaguanine (preQ(0)). The protein is 7-cyano-7-deazaguanine synthase of Rickettsia conorii (strain ATCC VR-613 / Malish 7).